The sequence spans 395 residues: MEMKKSGLGTTAIHAGTLKNLYGTLAMPIYQTSTFIFDSAEQGGRRFALEEAGYIYTRLGNPTTTVLENKIAALEEGEAGIAMSSGMGAISSTLWTVLKAGDHVVTDKTLYGCTFALMNHGLTRFGVEVTFVDTSNLEEVKNAMKKNTRVVYLETPANPNLKIVDLEALSKIAHTNPNTLVIVDNTFATPYMQKPLKLGVDIVVHSATKYLNGHGDVIAGLVVTRQELADQIRFVGLKDMTGAVLGPQEAYYIIRGLKTFEIRMERHCKNARTIVDFLNKHPKVEKVYYPGLETHPGYEIAKKQMKDFGAMISFELKGGFEAGKTLLNNLKLCSLAVSLGDTETLIQHPASMTHSPYTKEEREVAGITDGLVRLSVGLENVEDIIADLEQGLEKI.

Residues 56–58 (YTR) and 86–87 (GM) contribute to the pyridoxal 5'-phosphate site. Tyr-111 is a substrate binding site. Position 206-208 (206-208 (SAT)) interacts with pyridoxal 5'-phosphate. Lys-209 is modified (N6-(pyridoxal phosphate)lysine). Arg-373 provides a ligand contact to substrate.

It belongs to the trans-sulfuration enzymes family. L-methionine gamma-lyase subfamily. As to quaternary structure, homotetramer. Pyridoxal 5'-phosphate is required as a cofactor.

It catalyses the reaction L-methionine + H2O = methanethiol + 2-oxobutanoate + NH4(+). It carries out the reaction L-homocysteine + H2O = 2-oxobutanoate + hydrogen sulfide + NH4(+) + H(+). The enzyme catalyses L-cysteine + H2O = hydrogen sulfide + pyruvate + NH4(+) + H(+). In terms of biological role, catalyzes the alpha,gamma-elimination of L-methionine to produce methanethiol, 2-oxobutanoate and ammonia, and that of L-homocysteine. Can also use L-cysteine as substrate, catalyzing its alpha,beta-elimination; this activity seems to only minimally contribute to the production of hydrogen sulfide (H2S) by F.nucleatum in the oral cavity, which is toxic for a large variety of cells in periodontal regions. This Fusobacterium nucleatum subsp. nucleatum (strain ATCC 25586 / DSM 15643 / BCRC 10681 / CIP 101130 / JCM 8532 / KCTC 2640 / LMG 13131 / VPI 4355) protein is L-methionine gamma-lyase.